A 193-amino-acid chain; its full sequence is Ion-translocating oxidoreductase complex subunit A (193 aa).

6 helical membrane passes run 5 to 25, 39 to 59, 72 to 92, 102 to 122, 134 to 154, and 171 to 191; these read ILLIISTALINNFVLVKFLGL, IGMGLATMFVLTVASLCAYLV, LRTLIFILVIAVVVQFTEMVI, LLGIFLPLITTNCAVLGVALL, VIYGFSASLGFSLVLVLFAAL, and SIALITAGLMSLAFMGFSGLV.

This sequence belongs to the NqrDE/RnfAE family. In terms of assembly, the complex is composed of six subunits: RnfA, RnfB, RnfC, RnfD, RnfE and RnfG.

Its subcellular location is the cell inner membrane. Part of a membrane-bound complex that couples electron transfer with translocation of ions across the membrane. The chain is Ion-translocating oxidoreductase complex subunit A from Histophilus somni (strain 129Pt) (Haemophilus somnus).